We begin with the raw amino-acid sequence, 461 residues long: Regulatory protein AtoC (461 aa).

Residues 6-120 (RILIVDDEDN…ELNLIVQRAL (115 aa)) form the Response regulatory domain. Aspartate 55 is subject to 4-aspartylphosphate. Histidine 73 bears the Phosphohistidine mark. The Sigma-54 factor interaction domain occupies 145–374 (ILTNSPAMMD…LSNVIERAVV (230 aa)). ATP is bound by residues 173–180 (GESGTGKE) and 236–245 (ANEGTLLLDE). The H-T-H motif DNA-binding region spans 433–452 (RTRTALMLGISRRALMYKLQ).

Post-translationally, phosphorylated by AtoS. Contains two phosphorylation sites, which are both involved in the transduction of the acetoacetate signal. Asp-55 is probably the primary phosphorylation site, but either both residues can be phosphorylated independently by AtoS or the phosphate group can be transferred between them. In terms of processing, the N-terminus is blocked.

It is found in the cytoplasm. Member of the two-component regulatory system AtoS/AtoC. In the presence of acetoacetate, AtoS/AtoC stimulates the expression of the atoDAEB operon, leading to short chain fatty acid catabolism and activation of the poly-(R)-3-hydroxybutyrate (cPHB) biosynthetic pathway. Also induces the operon in response to spermidine. Involved in the regulation of motility and chemotaxis, via transcriptional induction of the flagellar regulon. AtoC acts by binding directly to the promoter region of the target genes. In addition to its role as a transcriptional regulator, functions as a post-translational regulator that inhibits polyamine biosynthesis via regulation of ornithine decarboxylase (ODC). The chain is Regulatory protein AtoC (atoC) from Escherichia coli (strain K12).